A 238-amino-acid chain; its full sequence is Large ribosomal subunit protein uL2 (238 aa).

Residues phenylalanine 201–lysine 238 are disordered.

The protein belongs to the universal ribosomal protein uL2 family. In terms of assembly, part of the 50S ribosomal subunit. Forms a bridge to the 30S subunit in the 70S ribosome.

Its function is as follows. One of the primary rRNA binding proteins. Required for association of the 30S and 50S subunits to form the 70S ribosome, for tRNA binding and peptide bond formation. It has been suggested to have peptidyltransferase activity; this is somewhat controversial. Makes several contacts with the 16S rRNA in the 70S ribosome. This is Large ribosomal subunit protein uL2 from Methanoregula boonei (strain DSM 21154 / JCM 14090 / 6A8).